Consider the following 216-residue polypeptide: Guanylate kinase (216 aa).

Positions G11–L189 constitute a Guanylate kinase-like domain. G18 to G25 lines the ATP pocket.

It belongs to the guanylate kinase family.

It is found in the cytoplasm. The catalysed reaction is GMP + ATP = GDP + ADP. Functionally, essential for recycling GMP and indirectly, cGMP. The protein is Guanylate kinase (gmk) of Clostridium perfringens (strain 13 / Type A).